The chain runs to 211 residues: Protein CHLORORESPIRATORY REDUCTION 41, chloroplastic (211 aa).

The N-terminal 38 residues, 1–38 (MASTSTLLLPSLSSKNLHIAVPIRTNSFVRRTTKFSTK), are a transit peptide targeting the chloroplast. A coiled-coil region spans residues 136–163 (AKAGEIVAERAREEAEVLRDEGKVEERM).

As to quaternary structure, biogenesis factor component of the plastidial NDH subcomplex A.

The protein localises to the plastid. It is found in the chloroplast. Its subcellular location is the chloroplast stroma. Its function is as follows. Required for both formation and activity of the chloroplast NAD(P)H dehydrogenase (NDH) complex of the photosynthetic electron transport chain. Functions in assembly or stabilization of the NDH complex; probably involved, together with NdhO and NdhH, in the formation of an NDH subcomplex A assembly intermediate (NAI500). This Arabidopsis thaliana (Mouse-ear cress) protein is Protein CHLORORESPIRATORY REDUCTION 41, chloroplastic.